A 377-amino-acid polypeptide reads, in one-letter code: DNA methyltransferase CcrM (377 aa).

The 103-residue stretch at 271-373 folds into the RAMA domain; sequence LGKAELTVMT…LRKIIREQMA (103 aa).

It belongs to the N(4)/N(6)-methyltransferase family.

It catalyses the reaction a 2'-deoxyadenosine in DNA + S-adenosyl-L-methionine = an N(6)-methyl-2'-deoxyadenosine in DNA + S-adenosyl-L-homocysteine + H(+). Its function is as follows. A beta subtype methylase that recognizes the double-stranded sequence 5'-GANTC-3' and methylates on A-2 on both strands. Overexpression from a moderate-copy number plasmid (10-12 copies/cell) leads to enlarged, branched cells, many with 3-5 genome equivalents. Contributes to the accurate cell-cycle control of DNA replication and cellular morphology. This is DNA methyltransferase CcrM from Brucella abortus (strain 2308).